Consider the following 322-residue polypeptide: NADH-cytochrome b5 reductase 2 (322 aa).

A helical membrane pass occupies residues 30 to 46; it reads LAPVYVAVGLAGLGVGL. The region spanning 71-176 is the FAD-binding FR-type domain; the sequence is QGWVNLKLSD…KGPLPKYPWE (106 aa). 179 to 214 is an FAD binding site; that stretch reads KHKHICLVAGGTGITPMYQLAREIFKNPEDKTKVTL.

This sequence belongs to the flavoprotein pyridine nucleotide cytochrome reductase family. The cofactor is FAD.

The protein resides in the mitochondrion outer membrane. It carries out the reaction 2 Fe(III)-[cytochrome b5] + NADH = 2 Fe(II)-[cytochrome b5] + NAD(+) + H(+). In terms of biological role, may mediate the reduction of outer membrane cytochrome b5. The protein is NADH-cytochrome b5 reductase 2 (mcr1) of Emericella nidulans (strain FGSC A4 / ATCC 38163 / CBS 112.46 / NRRL 194 / M139) (Aspergillus nidulans).